The following is a 295-amino-acid chain: Histamine N-methyltransferase (295 aa).

At Ala2 the chain carries Blocked amino end (Ala). Glu28 is a substrate binding site. S-adenosyl-L-methionine-binding residues include Gly60, Glu89, Gln94, Ser120, and Ile143. Asn284 contacts substrate.

The protein belongs to the class I-like SAM-binding methyltransferase superfamily. HNMT family. As to quaternary structure, monomer.

The protein localises to the cytoplasm. The enzyme catalyses histamine + S-adenosyl-L-methionine = N(tau)-methylhistamine + S-adenosyl-L-homocysteine + H(+). Its function is as follows. Inactivates histamine by N-methylation. Plays an important role in degrading histamine and in regulating the airway response to histamine. The sequence is that of Histamine N-methyltransferase (Hnmt) from Rattus norvegicus (Rat).